Here is a 92-residue protein sequence, read N- to C-terminus: Small ribosomal subunit protein bS20 (92 aa).

It belongs to the bacterial ribosomal protein bS20 family.

Its function is as follows. Binds directly to 16S ribosomal RNA. This is Small ribosomal subunit protein bS20 from Rickettsia africae (strain ESF-5).